The sequence spans 98 residues: Cell cycle protein GpsB (98 aa).

Positions 34–71 (LDIVIKDYEAFQQELDELRQENARLKRQVEELQKRPTT) form a coiled coil.

This sequence belongs to the GpsB family. In terms of assembly, forms polymers through the coiled coil domains. Interacts with PBP1, MreC and EzrA.

It localises to the cytoplasm. In terms of biological role, divisome component that associates with the complex late in its assembly, after the Z-ring is formed, and is dependent on DivIC and PBP2B for its recruitment to the divisome. Together with EzrA, is a key component of the system that regulates PBP1 localization during cell cycle progression. Its main role could be the removal of PBP1 from the cell pole after pole maturation is completed. Also contributes to the recruitment of PBP1 to the division complex. Not essential for septum formation. The polypeptide is Cell cycle protein GpsB (Geobacillus thermodenitrificans (strain NG80-2)).